The primary structure comprises 240 residues: MKRPSGRAADQLRSIRITRNYTKHAEGSVLVEFGDTKVICTASIETGVPRFLKGQGQGWLTAEYGMLPRATGERNQREAARGKQGGRTLEIQRLIGRSLRAALDMSKLGENTLYIDCDVIQADGGTRTASITGAMVAVIDALKVLKKRGGLKGGDPVKQMIAAVSVGIYQGEPVLDLDYLEDSAAETDLNVVMTDAGGFIEVQGTAEGAPFHADELNAMLALAHDGVRQLFELQRAALAD.

Residues Arg-87 and 125–127 (GTR) contribute to the phosphate site.

Belongs to the RNase PH family. Homohexameric ring arranged as a trimer of dimers.

The enzyme catalyses tRNA(n+1) + phosphate = tRNA(n) + a ribonucleoside 5'-diphosphate. In terms of biological role, phosphorolytic 3'-5' exoribonuclease that plays an important role in tRNA 3'-end maturation. Removes nucleotide residues following the 3'-CCA terminus of tRNAs; can also add nucleotides to the ends of RNA molecules by using nucleoside diphosphates as substrates, but this may not be physiologically important. Probably plays a role in initiation of 16S rRNA degradation (leading to ribosome degradation) during starvation. The polypeptide is Ribonuclease PH (Stutzerimonas stutzeri (strain A1501) (Pseudomonas stutzeri)).